Reading from the N-terminus, the 164-residue chain is Ribonuclease H (164 aa).

An RNase H type-1 domain is found at 9 to 150 (DMPRVTIYTD…ADTLANAATD (142 aa)). Aspartate 18, glutamate 56, aspartate 78, and aspartate 142 together coordinate Mg(2+).

This sequence belongs to the RNase H family. Monomer. Mg(2+) is required as a cofactor.

The protein localises to the cytoplasm. The enzyme catalyses Endonucleolytic cleavage to 5'-phosphomonoester.. Functionally, endonuclease that specifically degrades the RNA of RNA-DNA hybrids. In Chromohalobacter salexigens (strain ATCC BAA-138 / DSM 3043 / CIP 106854 / NCIMB 13768 / 1H11), this protein is Ribonuclease H.